The chain runs to 209 residues: Elongation factor Ts, chloroplastic (209 aa).

Belongs to the EF-Ts family.

The protein resides in the plastid. It localises to the chloroplast. In terms of biological role, associates with the EF-Tu.GDP complex and induces the exchange of GDP to GTP. It remains bound to the aminoacyl-tRNA.EF-Tu.GTP complex up to the GTP hydrolysis stage on the ribosome. In Cyanidioschyzon merolae (strain NIES-3377 / 10D) (Unicellular red alga), this protein is Elongation factor Ts, chloroplastic (tsf).